The following is a 219-amino-acid chain: Large ribosomal subunit protein uL3 (219 aa).

Positions 136 to 156 are disordered; sequence GASHGAHRNHRKPGSIGGCAT.

Belongs to the universal ribosomal protein uL3 family. Part of the 50S ribosomal subunit. Forms a cluster with proteins L14 and L19.

In terms of biological role, one of the primary rRNA binding proteins, it binds directly near the 3'-end of the 23S rRNA, where it nucleates assembly of the 50S subunit. This chain is Large ribosomal subunit protein uL3, found in Kineococcus radiotolerans (strain ATCC BAA-149 / DSM 14245 / SRS30216).